The sequence spans 422 residues: Adhesin YadA (422 aa).

Positions 1 to 25 (MTKDFKISVSAALISALFSSPYAFA) are cleaved as a signal peptide. A surface exposed passenger domain region spans residues 26–330 (NNDEVHFTAV…KKAIRESNQY (305 aa)). Residues 206–236 (VNVAQLKKEIEKTQVNANKKSAEVLGIANNY) adopt a coiled-coil conformation. Residues 331–368 (TDHKFRQLDNRLDKLDTRVDKGLASSAALNSLFQPYGV) form an outer membrane translocation of the passenger domain region. A run of 4 beta stranded transmembrane segments spans residues 369–379 (GKVNFTAGVGG), 383–394 (SQALAIGSGYRV), 401–407 (KAGVAYA), and 411–422 (DVMYNASFNIEW). Residues 369 to 422 (GKVNFTAGVGGYRSSQALAIGSGYRVNESVALKAGVAYAGSSDVMYNASFNIEW) form a translocator domain region.

This sequence belongs to the autotransporter-2 (AT-2) (TC 1.B.40) family. As to quaternary structure, homotrimer; trimers are very stable, not disrupted by heating at 95 degrees Celsius for 10 minutes in SDS sample buffer.

It localises to the cell surface. The protein localises to the cell outer membrane. In terms of biological role, collagen-binding outer membrane protein forming a fibrillar matrix on the bacterial cell surface and phagocytosis resistance. Promotes initial attachment and invasion of eukaryotic cells. Also protects the bacteria by being responsible for agglutination, serum resistance and complement inactivation. Gly-389 plays an important role in this protein; replacing it with increasingly large polar residues decreases expression levels and trimer stability. Residues larger than Ser (Thr, Asn or His) significantly decrease serume resistance and bacterial autoagglution without affecting adhesion to host cells or host cell cytokine production. The protein is Adhesin YadA of Yersinia enterocolitica serotype O:8 / biotype 1B (strain NCTC 13174 / 8081).